A 429-amino-acid polypeptide reads, in one-letter code: MGLKLNISNDLKKSGFMLRQSLLKTSVSNFLSLNASSTMSRAFIRNPKFYSTSSNDTVLYESKNGARIFTLNRPKVLNAINVDMIDSILPKLVSLEESNLAKVIILKGNGRSFSSGGDIKAAALSIQDGKLPEVRHAFAQEYRLSHTLATYQKPVVALMNGITMGGGSGLAMHVPFRIACEDTMFAMPETGIGYFTDVAASFFFSRLPGYFGTYLGLTSQIVKGYDCLRTGIATHFVPKHMFPHLEDRLAELNTSDISKINNTILEFAEFASSSPPTFTPDVMDVINKCFCKNDTVDIIRALKEYASNTSALAEFAKSTVKTLYSKSPTSIAVTNRLIKSAAKWSISEAFYYDHIVSYYMLKQPDFVEGVNAQLITKTKNPKWSKSHEYHFKDLENYFKLPSEYNNGISFAAKGRRKTPLWNYKTYPYL.

Substrate-binding residues include glutamate 141, glycine 166, glutamate 189, and aspartate 197.

Belongs to the enoyl-CoA hydratase/isomerase family. Mitochondrion-specific ribosomal protein mS47 subfamily. In terms of assembly, component of the mitochondrial small ribosomal subunit (mt-SSU). Mature yeast 74S mitochondrial ribosomes consist of a small (37S) and a large (54S) subunit. The 37S small subunit contains a 15S ribosomal RNA (15S mt-rRNA) and at least 32 different proteins. The 54S large subunit contains a 21S rRNA (21S mt-rRNA) and at least 45 different proteins. mS47/snr1 forms a protuberance of the yeast mitoribosome and retains a solvent-exposed cavity likely capable of accommodating a substrate, in accordance with it being an active enzyme as well as an integral constituent of the mitoribosome.

The protein localises to the mitochondrion. The enzyme catalyses 3-hydroxy-2-methylpropanoyl-CoA + H2O = 3-hydroxy-2-methylpropanoate + CoA + H(+). It participates in amino-acid degradation; L-valine degradation. Its function is as follows. Component of the mitochondrial ribosome (mitoribosome), a dedicated translation machinery responsible for the synthesis of mitochondrial genome-encoded proteins, including at least some of the essential transmembrane subunits of the mitochondrial respiratory chain. The mitoribosomes are attached to the mitochondrial inner membrane and translation products are cotranslationally integrated into the membrane. mS47/snr1 has enzymatic activity in vitro, and is able to catalyze the specific hydrolysis of 3-hydroxyisobutyryl-CoA (HIBYL-CoA). However, because the turnover rate of mS47/snr1 is only a fraction of that of the homologous mammalian enzyme, the physiological function of this activity remains unclear. Has an indirect role in endocytic membrane trafficking. The sequence is that of Small ribosomal subunit protein mS47 (snr1) from Schizosaccharomyces pombe (strain 972 / ATCC 24843) (Fission yeast).